The sequence spans 203 residues: Glycerol-3-phosphate acyltransferase (203 aa).

5 consecutive transmembrane segments (helical) span residues 2 to 22 (LATL…AILV), 54 to 74 (CLVL…AYFL), 80 to 100 (ALGL…FFGF), 114 to 134 (LPIG…MVAI), and 153 to 173 (TWLI…LIIF).

Belongs to the PlsY family. In terms of assembly, probably interacts with PlsX.

It localises to the cell inner membrane. The catalysed reaction is an acyl phosphate + sn-glycerol 3-phosphate = a 1-acyl-sn-glycero-3-phosphate + phosphate. Its pathway is lipid metabolism; phospholipid metabolism. Functionally, catalyzes the transfer of an acyl group from acyl-phosphate (acyl-PO(4)) to glycerol-3-phosphate (G3P) to form lysophosphatidic acid (LPA). This enzyme utilizes acyl-phosphate as fatty acyl donor, but not acyl-CoA or acyl-ACP. This chain is Glycerol-3-phosphate acyltransferase, found in Pseudoalteromonas translucida (strain TAC 125).